Consider the following 237-residue polypeptide: UDP-2,3-diacylglucosamine hydrolase (237 aa).

Positions 8, 10, 41, 78, and 113 each coordinate Mn(2+). 78 to 79 (NR) contributes to the substrate binding site. Residues aspartate 121, serine 159, glutamine 164, and histidine 195 each contribute to the substrate site. Mn(2+) is bound by residues histidine 195 and histidine 197.

The protein belongs to the LpxH family. The cofactor is Mn(2+).

It is found in the cell inner membrane. It carries out the reaction UDP-2-N,3-O-bis[(3R)-3-hydroxytetradecanoyl]-alpha-D-glucosamine + H2O = 2-N,3-O-bis[(3R)-3-hydroxytetradecanoyl]-alpha-D-glucosaminyl 1-phosphate + UMP + 2 H(+). It participates in glycolipid biosynthesis; lipid IV(A) biosynthesis; lipid IV(A) from (3R)-3-hydroxytetradecanoyl-[acyl-carrier-protein] and UDP-N-acetyl-alpha-D-glucosamine: step 4/6. Functionally, hydrolyzes the pyrophosphate bond of UDP-2,3-diacylglucosamine to yield 2,3-diacylglucosamine 1-phosphate (lipid X) and UMP by catalyzing the attack of water at the alpha-P atom. Involved in the biosynthesis of lipid A, a phosphorylated glycolipid that anchors the lipopolysaccharide to the outer membrane of the cell. This Chromobacterium violaceum (strain ATCC 12472 / DSM 30191 / JCM 1249 / CCUG 213 / NBRC 12614 / NCIMB 9131 / NCTC 9757 / MK) protein is UDP-2,3-diacylglucosamine hydrolase.